Reading from the N-terminus, the 101-residue chain is Large ribosomal subunit protein uL24 (101 aa).

Belongs to the universal ribosomal protein uL24 family. Part of the 50S ribosomal subunit.

Its function is as follows. One of two assembly initiator proteins, it binds directly to the 5'-end of the 23S rRNA, where it nucleates assembly of the 50S subunit. In terms of biological role, one of the proteins that surrounds the polypeptide exit tunnel on the outside of the subunit. The polypeptide is Large ribosomal subunit protein uL24 (Streptococcus gordonii (strain Challis / ATCC 35105 / BCRC 15272 / CH1 / DL1 / V288)).